The following is a 1904-amino-acid chain: Voltage-dependent calcium channel type A subunit alpha-1 (1904 aa).

The interval 1–45 is disordered; that stretch reads MLGGVGGRHMSTRRRGSSPLVRGGAGLTGYAGPGASGNSNDVAAI. A compositionally biased stretch (gly residues) spans 23-35; that stretch reads GGAGLTGYAGPGA. The Cytoplasmic portion of the chain corresponds to 30 to 168; it reads YAGPGASGNS…KHTRFIIEWP (139 aa). The stretch at 155 to 447 is one I repeat; the sequence is NCIRKHTRFI…LVLGVLSGEF (293 aa). A helical transmembrane segment spans residues 169–187; it reads PFEYAVLLTIIANCVVLAL. The Extracellular segment spans residues 188–205; sequence EEHLPKQDKTILAQKLEA. Residues 206–225 form a helical membrane-spanning segment; sequence TEIYFLGIFCVEASLKILAL. At 226 to 237 the chain is on the cytoplasmic side; it reads GFVLHRGSYLRN. A helical membrane pass occupies residues 238-259; it reads IWNIMDFFVVVTGFITAFSQGI. Over 260-264 the chain is Extracellular; the sequence is ELDMD. A helical transmembrane segment spans residues 265–283; the sequence is LRTLRAIRVLRPLKLVSGI. Over 284-302 the chain is Cytoplasmic; the sequence is PSLQVVLKSIIKAMAPLLQ. The chain crosses the membrane as a helical span at residues 303–322; the sequence is IGLLVLFAIVIFAIIGLEFY. The Extracellular segment spans residues 323-419; the sequence is SGTLHKTCYS…WTNDALGSTY (97 aa). Asn-353 and Asn-367 each carry an N-linked (GlcNAc...) asparagine glycan. The chain crosses the membrane as a helical span at residues 420–444; that stretch reads NWIYFIPLIVLGSFFMLNLVLGVLS. At 445–568 the chain is on the cytoplasmic side; that stretch reads GEFAKEREKV…YWIRKSVKSQ (124 aa). A disordered region spans residues 513–543; sequence KKLGKSKSTDTEEEEGDDDQDDGELSSSTKE. Acidic residues predominate over residues 523–536; it reads TEEEEGDDDQDDGE. Residues 554-797 form an II repeat; sequence EKRFRYWIRK…VFLAIAVDNL (244 aa). The helical transmembrane segment at 569–587 threads the bilayer; it reads KFYWFVIVLVFFNTVCVAV. The Extracellular portion of the chain corresponds to 588 to 602; it reads EHYGQPQWLTDFLYF. A helical membrane pass occupies residues 603-622; the sequence is AEFVFLALFMLEMFIKVYAL. Residues 623-630 lie on the Cytoplasmic side of the membrane; it reads GPRTYFDS. The helical transmembrane segment at 631–649 threads the bilayer; that stretch reads SFNRFDCVVISGSIFEVIW. Over 650 to 658 the chain is Extracellular; the sequence is SEVKSGSFG. A helical membrane pass occupies residues 659–677; it reads LSVLRALRLLRIFKVTKYW. The Cytoplasmic portion of the chain corresponds to 678–696; it reads KSLRNLVISLLSSMRSIIS. A helical transmembrane segment spans residues 697–716; it reads LLFLLFLFILIFALLGMQLF. The Extracellular portion of the chain corresponds to 717-769; that stretch reads GGQFNFDSGTPPTNFNTFPIALLTVFQILTGEDWNEVMYQGIESQGGHKKGMI. A helical transmembrane segment spans residues 770 to 794; sequence YSLYFIVLVLFGNYTLLNVFLAIAV. At 795-895 the chain is on the cytoplasmic side; it reads DNLANAQELS…VRRAAHWVVN (101 aa). A disordered region spans residues 827-869; that stretch reads QSLQNPKDGGAPKVEICPPNGKGGKQSSEEEKKQDEDDDTGPK. The III repeat unit spans residues 890–1177; it reads AHWVVNLRYF…IITFQEQGEA (288 aa). The chain crosses the membrane as a helical span at residues 896-914; the sequence is LRYFDFFIMVVISLSSIAL. At 915 to 930 the chain is on the extracellular side; it reads AAEDPVWEDSPRNEVL. The chain crosses the membrane as a helical span at residues 931–950; it reads NYFDYAFTGVFTVEMILKII. At 951–962 the chain is on the cytoplasmic side; sequence DLGIILHPGSYL. Residues 963 to 981 traverse the membrane as a helical segment; the sequence is REFWNIMDAVVVICAAVSF. Residues 982-994 lie on the Extracellular side of the membrane; that stretch reads AFDMTGSSAGQNL. An N-linked (GlcNAc...) asparagine glycan is attached at Asn-993. A helical transmembrane segment spans residues 995–1013; sequence STIKSLRVLRVLRPLKTIK. The Cytoplasmic portion of the chain corresponds to 1014–1032; that stretch reads RVPKLKAVFDCVVNSLKNV. The chain crosses the membrane as a helical span at residues 1033 to 1052; that stretch reads INILIVYILFQFIFAVIAVQ. At 1053-1141 the chain is on the extracellular side; the sequence is LFNGKFFYCS…EDKGPIQNFR (89 aa). Residues 1142-1166 form a helical membrane-spanning segment; the sequence is IEMSIFYIVYFIVFPFFFVNIFVAL. The Cytoplasmic portion of the chain corresponds to 1167-1221; sequence IIITFQEQGEAELQDGEIDKNQKSCIDFTIQARPLERYMPKERNSVKYKIWRIVV. An IV repeat occupies 1214–1470; that stretch reads YKIWRIVVST…DNFDYLTRDS (257 aa). Residues 1222-1250 form a helical membrane-spanning segment; that stretch reads STPFEYFIMGLIVLNTVLLMMKFHRQSDA. The Extracellular portion of the chain corresponds to 1251–1255; the sequence is YKNTL. Residues 1256–1275 form a helical membrane-spanning segment; the sequence is KYMNMCFTGMFTVECILKIA. Over 1276-1283 the chain is Cytoplasmic; sequence AFGVRNFF. A helical transmembrane segment spans residues 1284-1302; it reads KDAWNTFDFITVIGSIVDA. At 1303-1309 the chain is on the extracellular side; it reads LVIEFGE. The helical transmembrane segment at 1310–1328 threads the bilayer; that stretch reads NFINVGFLRLFRAARLIKL. Over 1329 to 1347 the chain is Cytoplasmic; that stretch reads LRQGYTIRILLWTFVQSFK. Residues 1348–1367 traverse the membrane as a helical segment; the sequence is ALPYVCLLIAMLFFIYAIIG. The Extracellular portion of the chain corresponds to 1368–1431; that stretch reads MQVFGNIALD…AKAGKQEGGC (64 aa). A phenylalkylamine binding region spans residues 1430–1471; the sequence is GCGSNIAYAYFVSFIFFCSFLMLNLFVAVIMDNFDYLTRDSS. Residues 1432–1456 form a helical membrane-spanning segment; it reads GSNIAYAYFVSFIFFCSFLMLNLFV. Residues 1457–1904 are Cytoplasmic-facing; that stretch reads AVIMDNFDYL…HSDSDEDDWC (448 aa). The 36-residue stretch at 1476–1511 folds into the EF-hand domain; sequence HHLDEFVRIWAEYDPNATGKIHYTEMYDMLKNMDPP. Positions 1489, 1491, 1493, 1495, and 1500 each coordinate Ca(2+). 3 disordered regions span residues 1652 to 1694, 1710 to 1788, and 1870 to 1904; these read THTG…HEGP, THHP…HSYP, and GGRLLPSPVPNGYKPQPQAKQRTPRHSDSDEDDWC. The segment covering 1670 to 1681 has biased composition (low complexity); it reads RSPSLRHSPGRP. The span at 1682-1691 shows a compositional bias: basic and acidic residues; the sequence is GYDHHGHYYH. Residues 1710-1725 are compositionally biased toward basic residues; that stretch reads THHPHPSQYNHRHRMR. Residues 1727-1740 show a composition bias toward low complexity; the sequence is PWSASTSPARTPSP. Polar residues predominate over residues 1751–1762; sequence GTTSLEQRSRSP. The segment covering 1771–1784 has biased composition (basic residues); it reads PHTHQHYHRHHPHQ.

Belongs to the calcium channel alpha-1 subunit (TC 1.A.1.11) family. CACNA1I subfamily. Interacts with CATSPER1 and CATSPER2, leading to suppress T-type calcium channel activity.

It is found in the membrane. Voltage-sensitive calcium channels (VSCC) mediate the entry of calcium ions into excitable cells and are also involved in a variety of calcium-dependent processes, including muscle contraction, neurotransmitter release, gene expression, cell motility, cell division and cell death. The sequence is that of Voltage-dependent calcium channel type A subunit alpha-1 (CAC) from Apis mellifera (Honeybee).